Consider the following 444-residue polypeptide: Pestheic acid cluster transcriptional regulator 2 (444 aa).

Positions 1–22 (MEAADPNNNLTITSPSTLLSNP) are enriched in polar residues. A disordered region spans residues 1 to 31 (MEAADPNNNLTITSPSTLLSNPTQPPAQPLK). The zn(2)-C6 fungal-type DNA-binding region spans 36-63 (CHACASSKVKCHKEKPTCSRCRKRGITC). The disordered stretch occupies residues 326–348 (ARVGSGVSTHTTAGQYEPQVEQQ). Residues 331–348 (GVSTHTTAGQYEPQVEQQ) show a composition bias toward polar residues.

Its subcellular location is the nucleus. Functionally, transcription factor that, with ptaR1 and ptaR3, coregulates the expression of the gene cluster that mediates the biosynthesis of pestheic acid, a diphenyl ether which is a biosynthetic precursor of the unique chloropupukeananes. The sequence is that of Pestheic acid cluster transcriptional regulator 2 from Pestalotiopsis fici (strain W106-1 / CGMCC3.15140).